A 251-amino-acid polypeptide reads, in one-letter code: 5'-nucleotidase SurE (251 aa).

Positions 8, 9, 39, and 95 each coordinate a divalent metal cation.

Belongs to the SurE nucleotidase family. A divalent metal cation serves as cofactor.

The protein localises to the cytoplasm. The catalysed reaction is a ribonucleoside 5'-phosphate + H2O = a ribonucleoside + phosphate. Its function is as follows. Nucleotidase that shows phosphatase activity on nucleoside 5'-monophosphates. This chain is 5'-nucleotidase SurE, found in Ralstonia pickettii (strain 12J).